The chain runs to 128 residues: Arsenic resistance transcriptional regulator ArsR1 (128 aa).

Residues 11-103 (MREILTPPIV…AMLKGVVDAN (93 aa)) enclose the HTH arsR-type domain. Residues Cys-43 and Cys-45 each contribute to the arsenite site. The segment at residues 44-67 (VCELTHALELSQPKISRHLAQLRE) is a DNA-binding region (H-T-H motif).

As to quaternary structure, homodimer.

It localises to the cytoplasm. In terms of biological role, binds arsenite and regulates the expression of arsenic efflux pumps. In vitro, also binds antimony and bismuth, but not arsenate. This chain is Arsenic resistance transcriptional regulator ArsR1, found in Pseudomonas putida (strain ATCC 47054 / DSM 6125 / CFBP 8728 / NCIMB 11950 / KT2440).